The sequence spans 320 residues: o-succinylbenzoate synthase (320 aa).

Lys133 (proton donor) is an active-site residue. The Mg(2+) site is built by Asp161, Glu190, and Asp213. The Proton acceptor role is filled by Lys235.

Belongs to the mandelate racemase/muconate lactonizing enzyme family. MenC type 1 subfamily. A divalent metal cation is required as a cofactor.

The catalysed reaction is (1R,6R)-6-hydroxy-2-succinyl-cyclohexa-2,4-diene-1-carboxylate = 2-succinylbenzoate + H2O. Its pathway is quinol/quinone metabolism; 1,4-dihydroxy-2-naphthoate biosynthesis; 1,4-dihydroxy-2-naphthoate from chorismate: step 4/7. The protein operates within quinol/quinone metabolism; menaquinone biosynthesis. Its function is as follows. Converts 2-succinyl-6-hydroxy-2,4-cyclohexadiene-1-carboxylate (SHCHC) to 2-succinylbenzoate (OSB). This is o-succinylbenzoate synthase from Salmonella paratyphi C (strain RKS4594).